Reading from the N-terminus, the 415-residue chain is ATP-dependent RNA helicase RhlB (415 aa).

The short motif at 9 to 37 (QRFSALPLHPIVRGALAKKGFDFCTPIQA) is the Q motif element. The 179-residue stretch at 40 to 218 (LPISLNGRDV…FEDMNEPEYI (179 aa)) folds into the Helicase ATP-binding domain. ATP is bound at residue 53–60 (AQTGTGKT). Positions 164–167 (DEAD) match the DEAD box motif. A Helicase C-terminal domain is found at 241–389 (DKMALLLTLM…VSQYETEALL (149 aa)).

It belongs to the DEAD box helicase family. RhlB subfamily. In terms of assembly, component of the RNA degradosome, which is a multiprotein complex involved in RNA processing and mRNA degradation.

The protein resides in the cytoplasm. The enzyme catalyses ATP + H2O = ADP + phosphate + H(+). In terms of biological role, DEAD-box RNA helicase involved in RNA degradation. Has RNA-dependent ATPase activity and unwinds double-stranded RNA. This chain is ATP-dependent RNA helicase RhlB, found in Haemophilus influenzae (strain ATCC 51907 / DSM 11121 / KW20 / Rd).